The chain runs to 184 residues: Ribosome maturation factor RimM (184 aa).

The PRC barrel domain occupies 106–184; it reads PGDYYWYQLE…RMIVDWDPEF (79 aa).

This sequence belongs to the RimM family. Binds ribosomal protein uS19.

Its subcellular location is the cytoplasm. An accessory protein needed during the final step in the assembly of 30S ribosomal subunit, possibly for assembly of the head region. Essential for efficient processing of 16S rRNA. May be needed both before and after RbfA during the maturation of 16S rRNA. It has affinity for free ribosomal 30S subunits but not for 70S ribosomes. This Chromohalobacter salexigens (strain ATCC BAA-138 / DSM 3043 / CIP 106854 / NCIMB 13768 / 1H11) protein is Ribosome maturation factor RimM.